A 533-amino-acid chain; its full sequence is Monogalactosyldiacylglycerol synthase 1, chloroplastic (533 aa).

A 1,2-diacyl-sn-glycero-3-phospho-(1'-sn-glycerol) contacts are provided by His-155 and Pro-189. His-155 lines the UDP pocket. The required for binding to diacyl glycerol stretch occupies residues 192 to 215 (QLPRSYNFLVKHGTLWKMTYYGTS). UDP is bound by residues Arg-324, Phe-413, Ile-414, 434–438 (GTIAE), and Glu-456.

Belongs to the glycosyltransferase 28 family. In terms of assembly, homodimer. As to expression, expressed in roots, stems, leaves, flowers, siliques and seeds.

It localises to the plastid. The protein localises to the chloroplast inner membrane. The catalysed reaction is a 1,2-diacyl-sn-glycerol + UDP-alpha-D-galactose = a 1,2-diacyl-3-O-(beta-D-galactosyl)-sn-glycerol + UDP + H(+). It carries out the reaction 1,2-di-(9Z,12Z-octadecadienoyl)-sn-glycerol + UDP-alpha-D-galactose = 1,2-di-(9Z,12Z-octadecadienoyl)-3-beta-D-galactosyl-sn-glycerol + UDP + H(+). The enzyme catalyses 1-(9Z-octadecenoyl)-2-hexadecanoyl-sn-glycerol + UDP-alpha-D-galactose = 1-(9Z-octadecenoyl)-2-hexadecanoyl-3-beta-D-galactosyl-sn-glycerol + UDP + H(+). It catalyses the reaction 1,2-di-(9Z-octadecenoyl)-sn-glycerol + UDP-alpha-D-galactose = 1,2-di-(9Z-octadecenoyl)-3-beta-D-galactosyl-sn-glycerol + UDP + H(+). With respect to regulation, activated by phosphatidate (PA) and phosphatidylglycerol (PG). Inhibited by galvestine-1. Its function is as follows. Involved in the synthesis of the major structural component of photosynthetic membranes. Required for proper thylakoid membrane biogenesis. Does not discriminate between prokaryotic (18:1/16:0) or eukaryotic (18:2/18:2) 1,2-diacylglycerol species, but operates with some preference for the prokaryotic one. Is responsible for most galactolipid synthesis in chloroplasts. Required for the formation of thylakoid membranes and functional photosynthetic electron transport during cotyledons greening in young seedlings. May link galactolipid synthesis with the coordinated transcriptional regulation of chloroplasts and other organelles during cotyledon greening. The protein is Monogalactosyldiacylglycerol synthase 1, chloroplastic of Arabidopsis thaliana (Mouse-ear cress).